Reading from the N-terminus, the 442-residue chain is MHIDNAITTTIETKTWRKSDTTWTLGLFGTAIGAGVLFFPIRAGFGGLIPILIMLVLAYPIAFLCHRALARLCLSGSNCSGNITETVEEHFGKTGGVVITFLYFFAICPLLWIYGVTITNTFMTFWENQLQLAPLNRGVVALALLLLMAVVIYFGKDLMVKVMSFLVFPFIACLVLISLSLIPYWNASVIEQVDLSQISLLGHDGILVTVWLGISIMVFSFNFSPIVSSFVVSKREEYEPEFGREYTEKKCSQIISRASILMVAVVMFFAFSCLFTLSPQNMAEAKAQNIPVLSYLANHFSSMAGSRSTFSITLEYAASLIALVAIFKSFFGHYLGTLEGLNGLVIKFGYKGDKTKISSGKLNLISMFFIMGSTWLVAYINPNILDLIEAMGAPIIASLLCLLPMYAIHKLPSLARFRGRPENYFVTIVGLLTIFNIVYKLL.

The next 11 membrane-spanning stretches (helical) occupy residues threonine 21–isoleucine 41, glycine 44–leucine 64, glycine 96–valine 116, valine 139–methionine 159, valine 162–isoleucine 182, isoleucine 206–isoleucine 226, alanine 258–serine 278, isoleucine 312–glycine 332, leucine 364–isoleucine 384, isoleucine 388–isoleucine 408, and glutamate 422–leucine 442.

The protein belongs to the amino acid/polyamine transporter 2 family. SdaC/TdcC subfamily.

It is found in the cell inner membrane. It carries out the reaction L-threonine(in) + H(+)(in) = L-threonine(out) + H(+)(out). It catalyses the reaction L-serine(in) + H(+)(in) = L-serine(out) + H(+)(out). Functionally, involved in the import of threonine and serine into the cell, with the concomitant import of a proton (symport system). The protein is Threonine/serine transporter TdcC of Yersinia enterocolitica serotype O:8 / biotype 1B (strain NCTC 13174 / 8081).